The primary structure comprises 193 residues: Large ribosomal subunit protein bL9 (193 aa).

Residues 155-193 are disordered; it reads AEGETLTSAEAIYDIQEKPLAENQEEMNDNDANSINEQA. Polar residues predominate over residues 184-193; sequence NDANSINEQA.

The protein belongs to the bacterial ribosomal protein bL9 family.

Its function is as follows. Binds to the 23S rRNA. The protein is Large ribosomal subunit protein bL9 of Bartonella quintana (strain Toulouse) (Rochalimaea quintana).